A 251-amino-acid chain; its full sequence is Phosphomannomutase (251 aa).

D18 functions as the Nucleophile in the catalytic mechanism. Mg(2+)-binding residues include D18 and D20. D20 functions as the Proton donor/acceptor in the catalytic mechanism. The alpha-D-mannose 1-phosphate site is built by R27, R129, R140, R147, S185, and D187. Mg(2+) is bound by residues D213, F225, D227, and T230.

Belongs to the eukaryotic PMM family. Homodimer. Mg(2+) is required as a cofactor.

It localises to the cytoplasm. The catalysed reaction is alpha-D-mannose 1-phosphate = D-mannose 6-phosphate. It functions in the pathway nucleotide-sugar biosynthesis; GDP-alpha-D-mannose biosynthesis; alpha-D-mannose 1-phosphate from D-fructose 6-phosphate: step 2/2. Functionally, catalyzes the interconversion of mannose-6-phosphate to mannose-1-phosphate, the precursor for the synthesis of GDP-mannose. GDP-mannose is an essential sugar nucleotide for the synthesis of D-mannose-containing cell wall polysaccharides (galactomannans and glucomannans), glycolipids, glycoproteins and the antioxidant L-ascorbate. The chain is Phosphomannomutase from Galdieria sulphuraria (Red alga).